Consider the following 136-residue polypeptide: Ribonuclease VapC47 (136 aa).

The 103-residue stretch at 2–104 (IYMDTSALTK…AIHLAAAAQI (103 aa)) folds into the PINc domain. Positions 5 and 94 each coordinate Mg(2+).

Belongs to the PINc/VapC protein family. It depends on Mg(2+) as a cofactor.

Its function is as follows. Toxic component of a type II toxin-antitoxin (TA) system. An RNase. Its toxic effect on colony formation is neutralized by coexpression with cognate antitoxin VapB47. This Mycobacterium tuberculosis (strain CDC 1551 / Oshkosh) protein is Ribonuclease VapC47.